The sequence spans 181 residues: Probable RNA 2'-phosphotransferase (181 aa).

It belongs to the KptA/TPT1 family.

Its function is as follows. Removes the 2'-phosphate from RNA via an intermediate in which the phosphate is ADP-ribosylated by NAD followed by a presumed transesterification to release the RNA and generate ADP-ribose 1''-2''-cyclic phosphate (APPR&gt;P). May function as an ADP-ribosylase. The sequence is that of Probable RNA 2'-phosphotransferase from Acaryochloris marina (strain MBIC 11017).